Consider the following 284-residue polypeptide: Neutral protease 2 homolog AFLA_119780 (284 aa).

Cystine bridges form between Cys-113/Cys-185 and Cys-192/Cys-210. His-235 contacts Zn(2+). The active site involves Glu-236. Positions 239 and 250 each coordinate Zn(2+).

Belongs to the peptidase M35 family. The cofactor is Zn(2+).

Its subcellular location is the secreted. The enzyme catalyses Preferential cleavage of bonds with hydrophobic residues in P1'. Also 3-Asn-|-Gln-4 and 8-Gly-|-Ser-9 bonds in insulin B chain.. Its function is as follows. Secreted metalloproteinase that allows assimilation of proteinaceous substrates. Shows high activities on basic nuclear substrates such as histone and protamine. The sequence is that of Neutral protease 2 homolog AFLA_119780 from Aspergillus flavus (strain ATCC 200026 / FGSC A1120 / IAM 13836 / NRRL 3357 / JCM 12722 / SRRC 167).